A 305-amino-acid chain; its full sequence is UDP-3-O-acyl-N-acetylglucosamine deacetylase (305 aa).

Zn(2+) contacts are provided by histidine 78, histidine 235, and aspartate 239. Histidine 262 functions as the Proton donor in the catalytic mechanism.

It belongs to the LpxC family. Zn(2+) is required as a cofactor.

It catalyses the reaction a UDP-3-O-[(3R)-3-hydroxyacyl]-N-acetyl-alpha-D-glucosamine + H2O = a UDP-3-O-[(3R)-3-hydroxyacyl]-alpha-D-glucosamine + acetate. Its pathway is glycolipid biosynthesis; lipid IV(A) biosynthesis; lipid IV(A) from (3R)-3-hydroxytetradecanoyl-[acyl-carrier-protein] and UDP-N-acetyl-alpha-D-glucosamine: step 2/6. Catalyzes the hydrolysis of UDP-3-O-myristoyl-N-acetylglucosamine to form UDP-3-O-myristoylglucosamine and acetate, the committed step in lipid A biosynthesis. This Citrifermentans bemidjiense (strain ATCC BAA-1014 / DSM 16622 / JCM 12645 / Bem) (Geobacter bemidjiensis) protein is UDP-3-O-acyl-N-acetylglucosamine deacetylase.